Reading from the N-terminus, the 292-residue chain is NAD kinase (292 aa).

Residue D73 is the Proton acceptor of the active site. Residues 73–74, 147–148, H158, R175, D177, 188–193, and Q247 contribute to the NAD(+) site; these read DG, NE, and TAYSLS.

Belongs to the NAD kinase family. The cofactor is a divalent metal cation.

The protein localises to the cytoplasm. It catalyses the reaction NAD(+) + ATP = ADP + NADP(+) + H(+). Functionally, involved in the regulation of the intracellular balance of NAD and NADP, and is a key enzyme in the biosynthesis of NADP. Catalyzes specifically the phosphorylation on 2'-hydroxyl of the adenosine moiety of NAD to yield NADP. The protein is NAD kinase of Enterobacter sp. (strain 638).